Consider the following 145-residue polypeptide: 3-hydroxyacyl-[acyl-carrier-protein] dehydratase FabZ (145 aa).

Residue H49 is part of the active site.

This sequence belongs to the thioester dehydratase family. FabZ subfamily.

It localises to the cytoplasm. The catalysed reaction is a (3R)-hydroxyacyl-[ACP] = a (2E)-enoyl-[ACP] + H2O. Functionally, involved in unsaturated fatty acids biosynthesis. Catalyzes the dehydration of short chain beta-hydroxyacyl-ACPs and long chain saturated and unsaturated beta-hydroxyacyl-ACPs. The protein is 3-hydroxyacyl-[acyl-carrier-protein] dehydratase FabZ of Anaplasma phagocytophilum (strain HZ).